We begin with the raw amino-acid sequence, 386 residues long: S-adenosylmethionine synthase (386 aa).

His16 lines the ATP pocket. Asp18 serves as a coordination point for Mg(2+). Glu44 lines the K(+) pocket. Glu57 and Gln100 together coordinate L-methionine. Residues 100–110 (QSSDIAQGVDR) form a flexible loop region. ATP contacts are provided by residues 165–167 (DAK), Asp240, 246–247 (RK), Ala263, and Lys267. Asp240 provides a ligand contact to L-methionine. L-methionine is bound at residue Lys271.

This sequence belongs to the AdoMet synthase family. As to quaternary structure, homotetramer; dimer of dimers. The cofactor is Mg(2+). K(+) serves as cofactor.

The protein resides in the cytoplasm. The enzyme catalyses L-methionine + ATP + H2O = S-adenosyl-L-methionine + phosphate + diphosphate. It functions in the pathway amino-acid biosynthesis; S-adenosyl-L-methionine biosynthesis; S-adenosyl-L-methionine from L-methionine: step 1/1. Its function is as follows. Catalyzes the formation of S-adenosylmethionine (AdoMet) from methionine and ATP. The overall synthetic reaction is composed of two sequential steps, AdoMet formation and the subsequent tripolyphosphate hydrolysis which occurs prior to release of AdoMet from the enzyme. The polypeptide is S-adenosylmethionine synthase (Francisella philomiragia subsp. philomiragia (strain ATCC 25017 / CCUG 19701 / FSC 153 / O#319-036)).